A 988-amino-acid chain; its full sequence is RecQ-like DNA helicase blm-1 (988 aa).

Positions Cys-46 to Leu-119 are disordered. Repeat copies occupy residues Asp-121–Glu-129 and Glu-130–Asp-138. Positions Asp-121 to Asp-138 are 2 X 9 AA tandem repeats of [DE]-P-P-I-V-D-L-D-[ED]. The disordered stretch occupies residues Thr-148–Thr-185. Over residues Ala-158 to Glu-174 the composition is skewed to acidic residues. ATP-binding positions include Phe-248–Gln-252 and Gly-272–Ser-276. Residues Ile-256–Lys-433 enclose the Helicase ATP-binding domain. A DEAH box motif is present at residues Asp-375–His-378. In terms of domain architecture, Helicase C-terminal spans Asn-458–Leu-603. The segment at Ser-478–Lys-480 is 3' overhang DNA-binding. Arg-562 serves as a coordination point for ATP. The tract at residues Arg-580–Arg-583 is 3' overhang DNA-binding. The Zn(2+) site is built by Cys-615, Cys-633, Cys-640, and Cys-643. 3' overhang DNA-binding stretches follow at residues Thr-676–Lys-678, Ala-687–Lys-691, and Tyr-736–Ala-742. In terms of domain architecture, HRDC spans Gly-807 to Arg-888. The disordered stretch occupies residues Gly-930–Met-988. Positions Lys-939 to Pro-955 match the Nuclear localization signal motif.

This sequence belongs to the helicase family. RecQ subfamily. Monomer. Homodimer (via N-terminus). Homotetramer (via N-terminus); dimer of dimers. Homohexamer (via N-terminus). Self-association negatively regulates DNA unwinding amplitude and rate. Oligomer forms dissociate into monomer in presence of ATP. Component of the BTR double Holliday Junction dissolution complex composed of at least him-6, top-3, rmh-1 and rmif-2, which is involved in double strand break repair in the germline. May interact with rmh-1; the interaction is required for mutual stability and localization at nuclear foci. Forms a complex composed of cdc-48.1, him-6 and crp-1; within the complex, interacts with cdc-48.1. Zn(2+) is required as a cofactor.

The protein resides in the nucleus. It is found in the chromosome. The catalysed reaction is Couples ATP hydrolysis with the unwinding of duplex DNA by translocating in the 3'-5' direction.. It carries out the reaction ATP + H2O = ADP + phosphate + H(+). Component of the BTR double Holliday Junction dissolution complex, which is involved in homologous recombination during meiotic double strand break in the germline. Stabilizes and positively regulates the localization of the BTR double Holliday Junction dissolution complex component rmh-1 at nuclear foci during meiotic recombination. Participates in DNA replication and repair. Exhibits a magnesium-dependent ATP-dependent DNA-helicase activity that unwinds single- and double-stranded DNA in a 3'-5' direction. Negatively regulates sister chromatid exchange (SCE). Its function is as follows. ATP-dependent DNA helicase that unwinds single- and double-stranded DNA in a 3'-5' direction. Participates in DNA replication and repair. Negatively regulates sister chromatid exchange (SCE). Stimulates DNA 4-way junction branch migration and DNA Holliday junction dissolution. Binds single-stranded DNA (ssDNA), forked duplex DNA and DNA Holliday junction. In Caenorhabditis elegans, this protein is RecQ-like DNA helicase blm-1.